A 91-amino-acid polypeptide reads, in one-letter code: Peptide Ctry2146 (91 aa).

An N-terminal signal peptide occupies residues 1 to 23 (MKTQTLLVTFLVVLLMVATQTEA). Leu33 is modified (leucine amide). The propeptide occupies 37-91 (GLLDGLLGKRGLLFGKRGPLFGKRALTNQDFLDFAYDPSLSAADMDALEMLFEDY).

This sequence belongs to the non-disulfide-bridged peptide (NDBP) superfamily. Short antimicrobial peptide (group 4) family. In terms of tissue distribution, expressed by the venom gland.

The protein resides in the secreted. Its subcellular location is the target cell membrane. In terms of biological role, antimicrobial peptide. In Chaerilus tryznai (Scorpion), this protein is Peptide Ctry2146.